We begin with the raw amino-acid sequence, 687 residues long: Glycine--tRNA ligase beta subunit (687 aa).

It belongs to the class-II aminoacyl-tRNA synthetase family. In terms of assembly, tetramer of two alpha and two beta subunits.

Its subcellular location is the cytoplasm. It catalyses the reaction tRNA(Gly) + glycine + ATP = glycyl-tRNA(Gly) + AMP + diphosphate. The sequence is that of Glycine--tRNA ligase beta subunit from Geotalea daltonii (strain DSM 22248 / JCM 15807 / FRC-32) (Geobacter daltonii).